A 303-amino-acid chain; its full sequence is GMP synthase [glutamine-hydrolyzing] subunit B (303 aa).

The region spanning 1 to 183 (MDVEKFVENA…LGLPKEISER (183 aa)) is the GMPS ATP-PPase domain. 28 to 34 (SGGVDSS) lines the ATP pocket.

In terms of assembly, heterodimer composed of a glutamine amidotransferase subunit (A) and a GMP-binding subunit (B).

It catalyses the reaction XMP + L-glutamine + ATP + H2O = GMP + L-glutamate + AMP + diphosphate + 2 H(+). Its pathway is purine metabolism; GMP biosynthesis; GMP from XMP (L-Gln route): step 1/1. Catalyzes the synthesis of GMP from XMP. This is GMP synthase [glutamine-hydrolyzing] subunit B (guaAB) from Archaeoglobus fulgidus (strain ATCC 49558 / DSM 4304 / JCM 9628 / NBRC 100126 / VC-16).